A 520-amino-acid polypeptide reads, in one-letter code: Flavin-dependent halogenase radH (520 aa).

Positions 14, 17, and 47 each coordinate FAD. Chloride is bound by residues serine 330 and glycine 331.

It belongs to the flavin-dependent halogenase family.

The protein operates within secondary metabolite biosynthesis. Functionally, non-heme halogenase; part of the gene cluster that mediates the biosynthesis of radicicol, a resorcylic acid lactone (RAL) that irreversibly inhibits the HSP90 molecular chaperone, an important target for cancer chemotherapy. The cluster encodes only two apparent post-PKS enzymes, a cytochrome P450 monooxygenase (radP) and a non-heme halogenase (radH) that introduce the epoxide and the chlorine, respectively. If this cluster includes all the genes required for radicicol biosynthesis, the remaining structural features of radicicol are presumably generated by the PKSs rads1 and rads2. The C-2' ketone could arise if the R-PKS rads1 and NR-PKS rads2 each carry out four iterations, in contrast to the five iteration-three iteration split for the hypothemycin PKSs. The origin of the cis 5',6' double bond is not known. The radicicol R-PKS rads1 ER domain may catalyze either double bond isomerization or reduction in the third iteration. In Floropilus chiversii (Chaetomium chiversii), this protein is Flavin-dependent halogenase radH.